The following is a 412-amino-acid chain: Peptidase T (412 aa).

His84 lines the Zn(2+) pocket. Asp86 is an active-site residue. Asp146 contributes to the Zn(2+) binding site. Glu179 serves as the catalytic Proton acceptor. Residues Glu180, Asp202, and His385 each contribute to the Zn(2+) site.

This sequence belongs to the peptidase M20B family. Zn(2+) serves as cofactor.

The protein resides in the cytoplasm. It catalyses the reaction Release of the N-terminal residue from a tripeptide.. Functionally, cleaves the N-terminal amino acid of tripeptides. The sequence is that of Peptidase T from Haemophilus influenzae (strain ATCC 51907 / DSM 11121 / KW20 / Rd).